A 286-amino-acid polypeptide reads, in one-letter code: MTALLIDGNALSKTLRAQAAERAAALTARGHQPGLAVILVGANPASEVYVRNKIKACEDNGFFSLKDAYPATLSEADLLARIHELNRDPKIHGILVQLPLPAHIDSHKVIEAIAPEKDVDGFHVANAGALMTGKPLFRPCTPYGVMKMFEAHGIALQGANAVVIGRSNIVGKPMAMMLLDAGATVTICHSKTRDLAAHTREADIVVAAVGKRNILTADMVKPGATVIDVGMNRDDAGKLCGDVDFAGVKEVAGYITPVPGGVGPMTITMLLINTIESAERAAAAAA.

NADP(+)-binding positions include 165-167 (GRS) and Ser-190.

The protein belongs to the tetrahydrofolate dehydrogenase/cyclohydrolase family. As to quaternary structure, homodimer.

The catalysed reaction is (6R)-5,10-methylene-5,6,7,8-tetrahydrofolate + NADP(+) = (6R)-5,10-methenyltetrahydrofolate + NADPH. The enzyme catalyses (6R)-5,10-methenyltetrahydrofolate + H2O = (6R)-10-formyltetrahydrofolate + H(+). It functions in the pathway one-carbon metabolism; tetrahydrofolate interconversion. In terms of biological role, catalyzes the oxidation of 5,10-methylenetetrahydrofolate to 5,10-methenyltetrahydrofolate and then the hydrolysis of 5,10-methenyltetrahydrofolate to 10-formyltetrahydrofolate. This Burkholderia orbicola (strain MC0-3) protein is Bifunctional protein FolD.